The chain runs to 448 residues: Chromosomal replication initiator protein DnaA (448 aa).

The tract at residues 1–72 is domain I, interacts with DnaA modulators; the sequence is MPDLQELWNY…VEGAYEFAEI (72 aa). Positions 72–110 are domain II; the sequence is IELTPIFVLPGESDNLTPLEPEEEHVLTKAETPTFLRET. Residues 111–327 form a domain III, AAA+ region region; sequence HLNSKYTFDT…GALVRVQAYA (217 aa). ATP contacts are provided by Gly-155, Gly-157, Lys-158, and Thr-159. Residues 328–448 are domain IV, binds dsDNA; sequence TMQNAEITTS…ILDLKNTMKS (121 aa).

It belongs to the DnaA family. Oligomerizes as a right-handed, spiral filament on DNA at oriC.

It localises to the cytoplasm. Functionally, plays an essential role in the initiation and regulation of chromosomal replication. ATP-DnaA binds to the origin of replication (oriC) to initiate formation of the DNA replication initiation complex once per cell cycle. Binds the DnaA box (a 9 base pair repeat at the origin) and separates the double-stranded (ds)DNA. Forms a right-handed helical filament on oriC DNA; dsDNA binds to the exterior of the filament while single-stranded (ss)DNA is stabiized in the filament's interior. The ATP-DnaA-oriC complex binds and stabilizes one strand of the AT-rich DNA unwinding element (DUE), permitting loading of DNA polymerase. After initiation quickly degrades to an ADP-DnaA complex that is not apt for DNA replication. Binds acidic phospholipids. The protein is Chromosomal replication initiator protein DnaA of Latilactobacillus sakei subsp. sakei (strain 23K) (Lactobacillus sakei subsp. sakei).